The primary structure comprises 160 residues: Phosphopantetheine adenylyltransferase (160 aa).

S8 provides a ligand contact to substrate. ATP-binding positions include 8–9 and H16; that span reads SF. Residues K40, L73, and K87 each coordinate substrate. Residues 88–90, E98, and 122–128 each bind ATP; these read GLR and YGYVSST.

Belongs to the bacterial CoaD family. As to quaternary structure, homohexamer. Mg(2+) is required as a cofactor.

Its subcellular location is the cytoplasm. It catalyses the reaction (R)-4'-phosphopantetheine + ATP + H(+) = 3'-dephospho-CoA + diphosphate. It participates in cofactor biosynthesis; coenzyme A biosynthesis; CoA from (R)-pantothenate: step 4/5. Its function is as follows. Reversibly transfers an adenylyl group from ATP to 4'-phosphopantetheine, yielding dephospho-CoA (dPCoA) and pyrophosphate. The protein is Phosphopantetheine adenylyltransferase of Corynebacterium glutamicum (strain R).